Here is a 185-residue protein sequence, read N- to C-terminus: Ribosome-recycling factor (185 aa).

It belongs to the RRF family.

It is found in the cytoplasm. In terms of biological role, responsible for the release of ribosomes from messenger RNA at the termination of protein biosynthesis. May increase the efficiency of translation by recycling ribosomes from one round of translation to another. The protein is Ribosome-recycling factor of Erwinia tasmaniensis (strain DSM 17950 / CFBP 7177 / CIP 109463 / NCPPB 4357 / Et1/99).